The following is a 155-amino-acid chain: Urease accessory protein UreE (155 aa).

The protein belongs to the UreE family.

Its subcellular location is the cytoplasm. In terms of biological role, involved in urease metallocenter assembly. Binds nickel. Probably functions as a nickel donor during metallocenter assembly. The chain is Urease accessory protein UreE from Deinococcus radiodurans (strain ATCC 13939 / DSM 20539 / JCM 16871 / CCUG 27074 / LMG 4051 / NBRC 15346 / NCIMB 9279 / VKM B-1422 / R1).